A 418-amino-acid chain; its full sequence is 3-isopropylmalate dehydratase large subunit (418 aa).

3 residues coordinate [4Fe-4S] cluster: C298, C358, and C361.

This sequence belongs to the aconitase/IPM isomerase family. LeuC type 2 subfamily. As to quaternary structure, heterodimer of LeuC and LeuD. The cofactor is [4Fe-4S] cluster.

It catalyses the reaction (2R,3S)-3-isopropylmalate = (2S)-2-isopropylmalate. It participates in amino-acid biosynthesis; L-leucine biosynthesis; L-leucine from 3-methyl-2-oxobutanoate: step 2/4. Its function is as follows. Catalyzes the isomerization between 2-isopropylmalate and 3-isopropylmalate, via the formation of 2-isopropylmaleate. This is 3-isopropylmalate dehydratase large subunit from Caldanaerobacter subterraneus subsp. tengcongensis (strain DSM 15242 / JCM 11007 / NBRC 100824 / MB4) (Thermoanaerobacter tengcongensis).